Consider the following 509-residue polypeptide: Probable DNA ligase (509 aa).

D218 provides a ligand contact to ATP. K220 acts as the N6-AMP-lysine intermediate in catalysis. ATP contacts are provided by R225, R240, E269, F302, R374, and K380.

The protein belongs to the ATP-dependent DNA ligase family. The cofactor is Mg(2+).

The enzyme catalyses ATP + (deoxyribonucleotide)n-3'-hydroxyl + 5'-phospho-(deoxyribonucleotide)m = (deoxyribonucleotide)n+m + AMP + diphosphate.. Functionally, DNA ligase that seals nicks in double-stranded DNA during DNA replication, DNA recombination and DNA repair. This is Probable DNA ligase from Nocardioides sp. (strain ATCC BAA-499 / JS614).